A 503-amino-acid chain; its full sequence is ATP synthase subunit alpha (503 aa).

Residue 169-176 coordinates ATP; sequence GDRKTGKT.

It belongs to the ATPase alpha/beta chains family. As to quaternary structure, F-type ATPases have 2 components, CF(1) - the catalytic core - and CF(0) - the membrane proton channel. CF(1) has five subunits: alpha(3), beta(3), gamma(1), delta(1), epsilon(1). CF(0) has three main subunits: a(1), b(2) and c(9-12). The alpha and beta chains form an alternating ring which encloses part of the gamma chain. CF(1) is attached to CF(0) by a central stalk formed by the gamma and epsilon chains, while a peripheral stalk is formed by the delta and b chains.

It localises to the cell membrane. The catalysed reaction is ATP + H2O + 4 H(+)(in) = ADP + phosphate + 5 H(+)(out). In terms of biological role, produces ATP from ADP in the presence of a proton gradient across the membrane. The alpha chain is a regulatory subunit. This chain is ATP synthase subunit alpha, found in Ligilactobacillus salivarius (strain UCC118) (Lactobacillus salivarius).